The chain runs to 99 residues: DNA-binding protein Fis (99 aa).

The H-T-H motif DNA-binding region spans 75-94 (QTRAALMLGVNRGTLRKKLK).

This sequence belongs to the transcriptional regulatory Fis family. Homodimer.

Functionally, activates ribosomal RNA transcription. Plays a direct role in upstream activation of rRNA promoters. This chain is DNA-binding protein Fis, found in Actinobacillus succinogenes (strain ATCC 55618 / DSM 22257 / CCUG 43843 / 130Z).